Consider the following 66-residue polypeptide: Conotoxin PnMLCL-01 (66 aa).

The N-terminal stretch at 1-19 (MLCLPVFIILLLLASPAAS) is a signal peptide. Residues 20–45 (NPLEKRIQSDLIRAALEDADTKNDPR) constitute a propeptide that is removed on maturation. A Cysteine amide modification is found at C63.

It belongs to the conotoxin T superfamily. Contains 2 disulfide bonds that can be either 'C1-C3, C2-C4' or 'C1-C4, C2-C3', since these disulfide connectivities have been observed for conotoxins with cysteine framework V (for examples, see AC P0DQQ7 and AC P81755). Expressed by the venom duct.

It is found in the secreted. This Conus pennaceus (Feathered cone) protein is Conotoxin PnMLCL-01.